Consider the following 185-residue polypeptide: Ribosome-recycling factor (185 aa).

It belongs to the RRF family.

It is found in the cytoplasm. Its function is as follows. Responsible for the release of ribosomes from messenger RNA at the termination of protein biosynthesis. May increase the efficiency of translation by recycling ribosomes from one round of translation to another. The chain is Ribosome-recycling factor from Streptococcus pneumoniae serotype 19F (strain G54).